The chain runs to 46 residues: Diuretic hormone (46 aa).

An Isoleucine amide modification is found at Ile-46.

It belongs to the sauvagine/corticotropin-releasing factor/urotensin I family.

It is found in the secreted. In terms of biological role, regulation of fluid secretion. Stimulates primary urine secretion by Malpighian tubules and causes a dose-dependent stimulation of cAMP levels in the tubules. The protein is Diuretic hormone of Locusta migratoria (Migratory locust).